Consider the following 601-residue polypeptide: uncharacterized protein (601 aa).

This sequence belongs to the chlamydial CPn_1016/CT_858/TC_0248 family.

This is an uncharacterized protein from Chlamydia muridarum (strain MoPn / Nigg).